Consider the following 254-residue polypeptide: uncharacterized protein (254 aa).

The N-terminal stretch at 1-22 (MKRLKKIVLCISFLFLTIFIGG) is a signal peptide. C23 carries the N-palmitoyl cysteine lipid modification. C23 is lipidated: S-diacylglycerol cysteine.

Belongs to the staphylococcal tandem lipoprotein family.

The protein resides in the cell membrane. This is an uncharacterized protein from Staphylococcus aureus (strain MSSA476).